The chain runs to 663 residues: (R)-specific secondary-alkylsulfatase (663 aa).

The first 28 residues, 1–28, serve as a signal peptide directing secretion; it reads MSRFIRASQRRTLLATLIAATLAQPLLA. Zn(2+) is bound by residues histidine 179, histidine 181, aspartate 183, and histidine 184. Glutamine 232 lines the sulfate pocket. The Zn(2+) site is built by glutamate 291 and aspartate 310. Sulfate contacts are provided by residues 318–323 and arginine 328; that span reads NLLTPR. Zn(2+) is bound at residue histidine 355. Tyrosine 417 serves as a coordination point for sulfate.

The protein belongs to the metallo-beta-lactamase superfamily. Type III sulfatase family. In terms of assembly, homodimer.

It carries out the reaction an (R)-secondary-alkyl sulfate + H2O = an (S)-secondary-alcohol + sulfate.. Alkylsulfatase that catalyzes the enantioselective hydrolysis of secondary-alkylsulfates with strict inversion of configuration, leading to the formation of homochiral (S)-configurated alcohols and nonreacted sulfate esters. The substrate spectrum includes a range of linear, branched or cyclic sec-alkylsulfates. Can use sec-alkylsulfate esters bearing aromatic, olefinic and acetylenic moieties. Acts by cleaving the C-O bond, resulting in inversion at the carbon. In Pseudomonas sp, this protein is (R)-specific secondary-alkylsulfatase.